The primary structure comprises 630 residues: Sodium-dependent serotonin transporter (630 aa).

Over 1–87 the chain is Cytoplasmic; that stretch reads METTPLNSQK…ERETWGKKVD (87 aa). A disordered region spans residues 31-59; it reads VPTPGDKVESGQISNGYSAVPSPGAGDDT. Tyr47 is modified (phosphotyrosine). Residues 88–112 form a helical membrane-spanning segment; that stretch reads FLLSVIGYAVDLGNVWRFPYICYQN. 5 residues coordinate Na(+): Gly94, Ala96, Val97, Asp98, and Asn101. Residue Asp98 participates in serotonin binding. Residues 113-115 lie on the Extracellular side of the membrane; it reads GGG. The helical transmembrane segment at 116–135 threads the bilayer; that stretch reads AFLIPYTIMAIFGGIPLFYM. The Cytoplasmic portion of the chain corresponds to 136-160; it reads ELALGQYHRNGCISIWRKICPIFKG. At Tyr142 the chain carries Phosphotyrosine. A helical transmembrane segment spans residues 161 to 186; sequence IGYAICIIAFYIASYYNTIMAWALYY. The Extracellular portion of the chain corresponds to 187 to 252; that stretch reads LISSFTDQLP…KGLQDLGGIS (66 aa). A disulfide bridge links Cys200 with Cys209. 2 N-linked (GlcNAc...) asparagine glycosylation sites follow: Asn208 and Asn217. Residues 253-271 traverse the membrane as a helical segment; sequence WQLALCIMLIFTVIYFSIW. Topologically, residues 272-277 are cytoplasmic; sequence KGVKTS. The residue at position 276 (Thr276) is a Phosphothreonine. The chain crosses the membrane as a helical span at residues 278–297; it reads GKVVWVTATFPYIILSVLLV. Residues 298-324 lie on the Extracellular side of the membrane; that stretch reads RGATLPGAWRGVLFYLKPNWQKLLETG. The chain crosses the membrane as a helical span at residues 325–347; it reads VWIDAAAQIFFSLGPGFGVLLAF. Na(+) is bound at residue Ser336. The Cytoplasmic portion of the chain corresponds to 348-360; the sequence is ASYNKFNNNCYQD. Residues 361-380 form a helical membrane-spanning segment; sequence ALVTSVVNCMTSFVSGFVIF. Asn368 is a binding site for Na(+). The Extracellular portion of the chain corresponds to 381–421; the sequence is TVLGYMAEMRNEDVSEVAKDAGPSLLFITYAEAIANMPAST. A helical membrane pass occupies residues 422–443; the sequence is FFAIIFFLMLITLGLDSTFAGL. 3 residues coordinate Na(+): Leu434, Asp437, and Ser438. Residue Thr439 coordinates serotonin. Residues 444-463 lie on the Cytoplasmic side of the membrane; the sequence is EGVITAVLDEFPHIWAKRRE. A helical transmembrane segment spans residues 464-483; sequence WFVLAVVITCFFGSLVTLTF. The Extracellular segment spans residues 484 to 494; sequence GGAYVVKLLEE. Serotonin contacts are provided by Glu494 and Tyr495. Residues 495 to 516 form a helical membrane-spanning segment; the sequence is YATGPAVLTVALIEAVAVSWFY. Residues 517–538 lie on the Cytoplasmic side of the membrane; sequence GITQFCRDVKEMLGFSPGWFWR. A helical membrane pass occupies residues 539-558; that stretch reads ICWVAISPLFLLFIICSFLM. Serotonin is bound by residues Phe556 and Ser559. Over 559–574 the chain is Extracellular; sequence SPPQLRLFQYNYPHWS. A helical transmembrane segment spans residues 575-595; it reads IILGYCIGTSSFVCIPTYIAY. The Cytoplasmic segment spans residues 596-630; the sequence is RLISTPGTFKERIIKSITPETPTEIPCGDVRLNAV. The interaction with RAB4A stretch occupies residues 616 to 624; that stretch reads TPTEIPCGD.

The protein belongs to the sodium:neurotransmitter symporter (SNF) (TC 2.A.22) family. SLC6A4 subfamily. In terms of assembly, monomer or homooligomer. Interacts (via C-terminus) with SCAMP2; the interaction is direct and retains transporter molecules intracellularly. Interacts with filamentous actin and STX1A. Interacts (via the N-terminus) with STX1A (via the H3 domain); this interaction regulates SLC4A6 channel conductance. Interacts with SEC23A, SEC24C and PATJ. Interacts with NOS1; the interaction may diminish the cell surface localization of SERT in the brain and, correspondingly, reduce serotonin reuptake. Interacts with TGFB1I1. Interacts with ITGAV:ITGB3. Interacts (via C-terminus) with ITGB3; this interaction regulates SLC6A4 trafficking. In terms of processing, phosphorylation at Thr-276 increases 5-HT uptake and is required for cGMP-mediated SERT regulation.

It is found in the cell membrane. Its subcellular location is the endomembrane system. It localises to the endosome membrane. The protein resides in the synapse. The protein localises to the cell junction. It is found in the focal adhesion. Its subcellular location is the cell projection. It localises to the neuron projection. It catalyses the reaction serotonin(out) + K(+)(in) + Na(+)(out) + H(+)(in) = serotonin(in) + K(+)(out) + Na(+)(in) + H(+)(out). In terms of biological role, serotonin transporter that cotransports serotonin with one Na(+) ion in exchange for one K(+) ion and possibly one proton in an overall electroneutral transport cycle. Transports serotonin across the plasma membrane from the extracellular compartment to the cytosol thus limiting serotonin intercellular signaling. Essential for serotonin homeostasis in the central nervous system. In the developing somatosensory cortex, acts in glutamatergic neurons to control serotonin uptake and its trophic functions accounting for proper spatial organization of cortical neurons and elaboration of sensory circuits. In the mature cortex, acts primarily in brainstem raphe neurons to mediate serotonin uptake from the synaptic cleft back into the pre-synaptic terminal thus terminating serotonin signaling at the synapse. Modulates mucosal serotonin levels in the gastrointestinal tract through uptake and clearance of serotonin in enterocytes. Required for enteric neurogenesis and gastrointestinal reflexes. Regulates blood serotonin levels by ensuring rapid high affinity uptake of serotonin from plasma to platelets, where it is further stored in dense granules via vesicular monoamine transporters and then released upon stimulation. Mechanistically, the transport cycle starts with an outward-open conformation having Na1(+) and Cl(-) sites occupied. The binding of a second extracellular Na2(+) ion and serotonin substrate leads to structural changes to outward-occluded to inward-occluded to inward-open, where the Na2(+) ion and serotonin are released into the cytosol. Binding of intracellular K(+) ion induces conformational transitions to inward-occluded to outward-open and completes the cycle by releasing K(+) possibly together with a proton bound to Asp-98 into the extracellular compartment. Na1(+) and Cl(-) ions remain bound throughout the transport cycle. Additionally, displays serotonin-induced channel-like conductance for monovalent cations, mainly Na(+) ions. The channel activity is uncoupled from the transport cycle and may contribute to the membrane resting potential or excitability. This chain is Sodium-dependent serotonin transporter (SLC6A4), found in Macaca mulatta (Rhesus macaque).